The primary structure comprises 202 residues: Potassium-transporting ATPase KdpC subunit (202 aa).

The chain crosses the membrane as a helical span at residues 7-27 (PAIFVLLALTLITGLLYPLAM). A disordered region spans residues 66-103 (FHGRPSATSTADPNDSTKTVPAPYNAANSSGSNLGPTS). 2 stretches are compositionally biased toward polar residues: residues 71–84 (SATS…STKT) and 91–101 (AANSSGSNLGP).

This sequence belongs to the KdpC family. As to quaternary structure, the system is composed of three essential subunits: KdpA, KdpB and KdpC.

It is found in the cell inner membrane. Its function is as follows. Part of the high-affinity ATP-driven potassium transport (or Kdp) system, which catalyzes the hydrolysis of ATP coupled with the electrogenic transport of potassium into the cytoplasm. This subunit acts as a catalytic chaperone that increases the ATP-binding affinity of the ATP-hydrolyzing subunit KdpB by the formation of a transient KdpB/KdpC/ATP ternary complex. This Bradyrhizobium sp. (strain ORS 278) protein is Potassium-transporting ATPase KdpC subunit.